We begin with the raw amino-acid sequence, 54 residues long: Ovomucoid (54 aa).

Positions Val4–Cys54 constitute a Kazal-like domain. Cystine bridges form between Cys6-Cys36, Cys14-Cys33, and Cys22-Cys54. Asn43 carries N-linked (GlcNAc...) asparagine glycosylation.

The protein resides in the secreted. This chain is Ovomucoid, found in Guira guira (Guira cuckoo).